The sequence spans 155 residues: Ribosome maturation factor RimP (155 aa).

This sequence belongs to the RimP family.

Its subcellular location is the cytoplasm. In terms of biological role, required for maturation of 30S ribosomal subunits. This is Ribosome maturation factor RimP from Phocaeicola vulgatus (strain ATCC 8482 / DSM 1447 / JCM 5826 / CCUG 4940 / NBRC 14291 / NCTC 11154) (Bacteroides vulgatus).